We begin with the raw amino-acid sequence, 381 residues long: MSDSQVRKGLNGVISDYTSISKVMPESNSLTYRGYAVEDLVENCSFEEVIYLLWFGELPTTEQLRTFNTTGRSYRSLDAGLISLIHSLPNTCHPMDVLRTAVSYMGTFDPDPFTRDADHIRSIGHNLLAQLPMVVAMDIRRRSGEEIIAPDHNKGIASNFLSMVFGNDDGSVANSADDIRDFERSLILYAEHSFNASTFSARVISSTRSDTYSAITGAIGALKGPLHGGANEFVMHTMLDIDDPNNAADWMGKALDRKERIMGFGHRVYKNGDSRVPSMEKSMRSLAARHRGQKWVHMYESMQEVMEARTGIKPNLDFPAGPAYYMLGFPVDFFTPLFVLARVSGWTAHIVEQFENNALIRPLSAYNGVEEREVVPISERT.

Residue His-192 participates in substrate binding. The active site involves His-227. 260 to 264 lines the CoA pocket; sequence RIMGF. Residue His-266 is part of the active site. Arg-275 is a binding site for substrate. Asp-317 is an active-site residue. Arg-342 and Arg-361 together coordinate substrate.

The protein belongs to the citrate synthase family. Homodimer.

The enzyme catalyses propanoyl-CoA + oxaloacetate + H2O = (2S,3S)-2-methylcitrate + CoA + H(+). It carries out the reaction oxaloacetate + acetyl-CoA + H2O = citrate + CoA + H(+). It participates in carbohydrate metabolism; tricarboxylic acid cycle. In terms of biological role, catalyzes the Claisen condensation of propionyl-CoA and oxaloacetate (OAA) to yield 2-methylcitrate (2-MC) and CoA. Also catalyzes the condensation of oxaloacetate with propionyl-CoA but with a lower specificity. In Corynebacterium glutamicum (strain ATCC 13032 / DSM 20300 / JCM 1318 / BCRC 11384 / CCUG 27702 / LMG 3730 / NBRC 12168 / NCIMB 10025 / NRRL B-2784 / 534), this protein is 2-methylcitrate synthase 1 (prpC1).